Reading from the N-terminus, the 272-residue chain is Indole-3-glycerol phosphate synthase (272 aa).

This sequence belongs to the TrpC family.

It carries out the reaction 1-(2-carboxyphenylamino)-1-deoxy-D-ribulose 5-phosphate + H(+) = (1S,2R)-1-C-(indol-3-yl)glycerol 3-phosphate + CO2 + H2O. It participates in amino-acid biosynthesis; L-tryptophan biosynthesis; L-tryptophan from chorismate: step 4/5. This chain is Indole-3-glycerol phosphate synthase, found in Mycobacterium ulcerans (strain Agy99).